Reading from the N-terminus, the 255-residue chain is Acetylglutamate kinase (255 aa).

Substrate is bound by residues 40 to 41 (GG), Arg62, and Asn157.

It belongs to the acetylglutamate kinase family. ArgB subfamily.

It localises to the cytoplasm. It carries out the reaction N-acetyl-L-glutamate + ATP = N-acetyl-L-glutamyl 5-phosphate + ADP. The protein operates within amino-acid biosynthesis; L-arginine biosynthesis; N(2)-acetyl-L-ornithine from L-glutamate: step 2/4. Its function is as follows. Catalyzes the ATP-dependent phosphorylation of N-acetyl-L-glutamate. This chain is Acetylglutamate kinase, found in Parabacteroides distasonis (strain ATCC 8503 / DSM 20701 / CIP 104284 / JCM 5825 / NCTC 11152).